Consider the following 555-residue polypeptide: Glutamine--tRNA ligase (555 aa).

The short motif at 35–45 (PEPNGYLHIGH) is the 'HIGH' region element. Residues 36–38 (EPN) and 42–48 (HIGHAKS) each bind ATP. Asp68 and Tyr213 together coordinate L-glutamine. Residues Thr232, 262-263 (RL), and 270-272 (MSK) each bind ATP. Positions 269 to 273 (VMSKR) match the 'KMSKS' region motif.

This sequence belongs to the class-I aminoacyl-tRNA synthetase family. In terms of assembly, monomer.

The protein localises to the cytoplasm. The catalysed reaction is tRNA(Gln) + L-glutamine + ATP = L-glutaminyl-tRNA(Gln) + AMP + diphosphate. This chain is Glutamine--tRNA ligase, found in Photobacterium profundum (strain SS9).